A 52-amino-acid polypeptide reads, in one-letter code: Phospholamban (52 aa).

At Met-1 the chain carries N-acetylmethionine. Topologically, residues 1–31 (MEKVQYLTRSAIRRASTIEMPQQARQNLQNL) are cytoplasmic. Ser-16 is subject to Phosphoserine; by PKA. A Phosphothreonine; by CaMK2 modification is found at Thr-17. Residues 32–52 (FINFCLILICLLLICIIVMLL) traverse the membrane as a helical segment. Cys-36 is lipidated: S-palmitoyl cysteine.

It belongs to the phospholamban family. In terms of assembly, homopentamer. Can also form heterooligomers with other sarcoplasmic/endoplasmic reticulum calcium ATPase (SERCA) regulators ARLN, ERLN, SLN and STRIT1/DWORF. Monomer. Interacts with HAX1. Interacts as a monomer with ATP2A2; the interaction decreases ATP2A2 Ca(2+) affinity. Interacts with VMP1; VMP1 competes with PLN and SLN to prevent them from forming an inhibitory complex with ATP2A2. Interacts with S100A1 in a Ca(2+)-dependent manner. Post-translationally, phosphorylated at Thr-17 by CaMK2, and in response to beta-adrenergic stimulation. Phosphorylation by DMPK may stimulate sarcoplasmic reticulum calcium uptake in cardiomyocytes. Phosphorylation by PKA abolishes the inhibition of ATP2A2-mediated calcium uptake. Palmitoylated by ZDHHC16, promoting formation of the homopentamer. In terms of processing, in elongated spermatids, proteolytically cleaved by SPPL2C which modulates intracellular Ca(2+) homeostasis. As to expression, expressed in testis (at protein level). In brain, expressed specifically in GABAergic GAD67+ neurons of the thalamic reticular nucleus where it colocalizes with ATP2A2/SERCA2 (at protein level). Expressed in the bladder and in the atria and ventricles of the heart.

It is found in the endoplasmic reticulum membrane. Its subcellular location is the sarcoplasmic reticulum membrane. The protein localises to the mitochondrion membrane. The protein resides in the membrane. Functionally, reversibly inhibits the activity of ATP2A2/SERCA2 in cardiac sarcoplasmic reticulum by decreasing the apparent affinity of the ATPase for Ca(2+). Binds preferentially to the ATP-bound E1 conformational form of ATP2A2 which predominates at low Ca(2+) concentrations during the diastolic phase of the cardiac cycle. Inhibits ATP2A2 Ca(2+) affinity by disrupting its allosteric activation by ATP. Modulates the contractility of the heart muscle in response to physiological stimuli via its effects on ATP2A2. Modulates calcium re-uptake during muscle relaxation and plays an important role in calcium homeostasis in the heart muscle. The degree of ATP2A2 inhibition depends on the oligomeric state of PLN. ATP2A2 inhibition is alleviated by PLN phosphorylation. Also inhibits the activity of ATP2A3/SERCA3. Controls intracellular Ca(2+) levels in elongated spermatids and may play a role in germ cell differentiation. In the thalamic reticular nucleus of the brain, plays a role in the regulation of sleep patterns and executive functioning. This is Phospholamban from Mus musculus (Mouse).